The following is a 288-amino-acid chain: uncharacterized protein (288 aa).

Residues 1–12 (MTEGRCAQHPDG) show a composition bias toward basic and acidic residues. A disordered region spans residues 1–20 (MTEGRCAQHPDGLDVQDVCD).

The protein belongs to the class IV-like SAM-binding methyltransferase superfamily. RNA methyltransferase TrmH family.

This is an uncharacterized protein from Mycobacterium tuberculosis (strain ATCC 25618 / H37Rv).